Reading from the N-terminus, the 452-residue chain is Phosphoglucosamine mutase (452 aa).

Serine 104 (phosphoserine intermediate) is an active-site residue. Mg(2+) contacts are provided by serine 104, aspartate 246, aspartate 248, and aspartate 250. Residue serine 104 is modified to Phosphoserine.

Belongs to the phosphohexose mutase family. The cofactor is Mg(2+). Post-translationally, activated by phosphorylation.

It catalyses the reaction alpha-D-glucosamine 1-phosphate = D-glucosamine 6-phosphate. Catalyzes the conversion of glucosamine-6-phosphate to glucosamine-1-phosphate. This is Phosphoglucosamine mutase from Streptomyces coelicolor (strain ATCC BAA-471 / A3(2) / M145).